The primary structure comprises 79 residues: uncharacterized protein (79 aa).

Positions 51–79 (PAQFPKVQRPPTLLGGKNTSTQTTLHPVI) are disordered. Residues 67-79 (KNTSTQTTLHPVI) show a composition bias toward polar residues.

This is an uncharacterized protein from Homo sapiens (Human).